The primary structure comprises 198 residues: ATP-dependent Clp protease proteolytic subunit (198 aa).

Ser-98 acts as the Nucleophile in catalysis. His-123 is a catalytic residue.

Belongs to the peptidase S14 family. Fourteen ClpP subunits assemble into 2 heptameric rings which stack back to back to give a disk-like structure with a central cavity, resembling the structure of eukaryotic proteasomes.

It localises to the cytoplasm. The catalysed reaction is Hydrolysis of proteins to small peptides in the presence of ATP and magnesium. alpha-casein is the usual test substrate. In the absence of ATP, only oligopeptides shorter than five residues are hydrolyzed (such as succinyl-Leu-Tyr-|-NHMec, and Leu-Tyr-Leu-|-Tyr-Trp, in which cleavage of the -Tyr-|-Leu- and -Tyr-|-Trp bonds also occurs).. Functionally, cleaves peptides in various proteins in a process that requires ATP hydrolysis. Has a chymotrypsin-like activity. Plays a major role in the degradation of misfolded proteins. This Listeria monocytogenes serovar 1/2a (strain ATCC BAA-679 / EGD-e) protein is ATP-dependent Clp protease proteolytic subunit.